The chain runs to 232 residues: Adenosylcobinamide-GDP ribazoletransferase (232 aa).

7 helical membrane-spanning segments follow: residues 24–44, 46–66, 96–116, 117–137, 153–173, 174–194, and 210–230; these read LWAF…ILYL, IPLA…LLHL, IAGV…LSML, PFYA…LGLA, GMNG…YLPV, VIYD…WYVI, and GAMA…SLCF.

It belongs to the CobS family. Mg(2+) serves as cofactor.

The protein localises to the cell membrane. The catalysed reaction is alpha-ribazole + adenosylcob(III)inamide-GDP = adenosylcob(III)alamin + GMP + H(+). It carries out the reaction alpha-ribazole 5'-phosphate + adenosylcob(III)inamide-GDP = adenosylcob(III)alamin 5'-phosphate + GMP + H(+). It participates in cofactor biosynthesis; adenosylcobalamin biosynthesis; adenosylcobalamin from cob(II)yrinate a,c-diamide: step 7/7. In terms of biological role, joins adenosylcobinamide-GDP and alpha-ribazole to generate adenosylcobalamin (Ado-cobalamin). Also synthesizes adenosylcobalamin 5'-phosphate from adenosylcobinamide-GDP and alpha-ribazole 5'-phosphate. This chain is Adenosylcobinamide-GDP ribazoletransferase, found in Pyrococcus abyssi (strain GE5 / Orsay).